A 130-amino-acid polypeptide reads, in one-letter code: uncharacterized protein (130 aa).

This is an uncharacterized protein from Orgyia pseudotsugata multicapsid polyhedrosis virus (OpMNPV).